A 518-amino-acid polypeptide reads, in one-letter code: 2-isopropylmalate synthase (518 aa).

The Pyruvate carboxyltransferase domain maps to 5-268 (IIIFDTTLRD…DTRINTQEIH (264 aa)). Positions 14, 202, 204, and 238 each coordinate Mn(2+). A regulatory domain region spans residues 393 to 518 (TLDVITSQCI…DLKLHKIAGV (126 aa)).

It belongs to the alpha-IPM synthase/homocitrate synthase family. LeuA type 1 subfamily. As to quaternary structure, homodimer. Requires Mn(2+) as cofactor.

Its subcellular location is the cytoplasm. It carries out the reaction 3-methyl-2-oxobutanoate + acetyl-CoA + H2O = (2S)-2-isopropylmalate + CoA + H(+). It participates in amino-acid biosynthesis; L-leucine biosynthesis; L-leucine from 3-methyl-2-oxobutanoate: step 1/4. Functionally, catalyzes the condensation of the acetyl group of acetyl-CoA with 3-methyl-2-oxobutanoate (2-ketoisovalerate) to form 3-carboxy-3-hydroxy-4-methylpentanoate (2-isopropylmalate). The protein is 2-isopropylmalate synthase of Pasteurella multocida (strain Pm70).